A 359-amino-acid polypeptide reads, in one-letter code: Chorismate synthase (359 aa).

Arg-47 is an NADP(+) binding site. FMN contacts are provided by residues 123 to 125 (RSS), Gly-283, 298 to 302 (KPTSS), and Arg-326.

The protein belongs to the chorismate synthase family. As to quaternary structure, homotetramer. FMNH2 is required as a cofactor.

It catalyses the reaction 5-O-(1-carboxyvinyl)-3-phosphoshikimate = chorismate + phosphate. The protein operates within metabolic intermediate biosynthesis; chorismate biosynthesis; chorismate from D-erythrose 4-phosphate and phosphoenolpyruvate: step 7/7. Functionally, catalyzes the anti-1,4-elimination of the C-3 phosphate and the C-6 proR hydrogen from 5-enolpyruvylshikimate-3-phosphate (EPSP) to yield chorismate, which is the branch point compound that serves as the starting substrate for the three terminal pathways of aromatic amino acid biosynthesis. This reaction introduces a second double bond into the aromatic ring system. This Chlamydia caviae (strain ATCC VR-813 / DSM 19441 / 03DC25 / GPIC) (Chlamydophila caviae) protein is Chorismate synthase.